We begin with the raw amino-acid sequence, 285 residues long: Probable endonuclease 4 (285 aa).

Residues His69, His109, Glu145, Asp179, His182, His216, Asp229, His231, and Glu261 each contribute to the Zn(2+) site.

This sequence belongs to the AP endonuclease 2 family. Zn(2+) is required as a cofactor.

The catalysed reaction is Endonucleolytic cleavage to 5'-phosphooligonucleotide end-products.. Its function is as follows. Endonuclease IV plays a role in DNA repair. It cleaves phosphodiester bonds at apurinic or apyrimidinic (AP) sites, generating a 3'-hydroxyl group and a 5'-terminal sugar phosphate. The protein is Probable endonuclease 4 of Yersinia pseudotuberculosis serotype O:1b (strain IP 31758).